The chain runs to 70 residues: Protein SlyX homolog (70 aa).

It belongs to the SlyX family.

The protein is Protein SlyX homolog of Shewanella frigidimarina (strain NCIMB 400).